The chain runs to 311 residues: Ribosomal RNA small subunit methyltransferase H (311 aa).

S-adenosyl-L-methionine-binding positions include 33 to 35 (AGH), aspartate 53, phenylalanine 80, aspartate 101, and glutamine 108.

It belongs to the methyltransferase superfamily. RsmH family.

It localises to the cytoplasm. The catalysed reaction is cytidine(1402) in 16S rRNA + S-adenosyl-L-methionine = N(4)-methylcytidine(1402) in 16S rRNA + S-adenosyl-L-homocysteine + H(+). Its function is as follows. Specifically methylates the N4 position of cytidine in position 1402 (C1402) of 16S rRNA. This is Ribosomal RNA small subunit methyltransferase H from Clostridioides difficile (strain 630) (Peptoclostridium difficile).